The sequence spans 143 residues: Large ribosomal subunit protein uL13 (143 aa).

Belongs to the universal ribosomal protein uL13 family. In terms of assembly, part of the 50S ribosomal subunit.

In terms of biological role, this protein is one of the early assembly proteins of the 50S ribosomal subunit, although it is not seen to bind rRNA by itself. It is important during the early stages of 50S assembly. This chain is Large ribosomal subunit protein uL13, found in Methanosarcina acetivorans (strain ATCC 35395 / DSM 2834 / JCM 12185 / C2A).